The following is a 124-amino-acid chain: Aspartate 1-decarboxylase (124 aa).

Residue S21 is the Schiff-base intermediate with substrate; via pyruvic acid of the active site. S21 bears the Pyruvic acid (Ser) mark. T53 provides a ligand contact to substrate. Residue Y54 is the Proton donor of the active site. 69–71 serves as a coordination point for substrate; sequence GAA.

Belongs to the PanD family. As to quaternary structure, heterooctamer of four alpha and four beta subunits. Pyruvate serves as cofactor. In terms of processing, is synthesized initially as an inactive proenzyme, which is activated by self-cleavage at a specific serine bond to produce a beta-subunit with a hydroxyl group at its C-terminus and an alpha-subunit with a pyruvoyl group at its N-terminus.

It is found in the cytoplasm. The catalysed reaction is L-aspartate + H(+) = beta-alanine + CO2. It participates in cofactor biosynthesis; (R)-pantothenate biosynthesis; beta-alanine from L-aspartate: step 1/1. In terms of biological role, catalyzes the pyruvoyl-dependent decarboxylation of aspartate to produce beta-alanine. The polypeptide is Aspartate 1-decarboxylase (Dehalococcoides mccartyi (strain CBDB1)).